A 449-amino-acid polypeptide reads, in one-letter code: C4-dicarboxylate transport protein (449 aa).

The interval 1 to 20 (MSALTESFGPVPSAKSKPPA) is disordered. Low complexity predominate over residues 10–20 (PVPSAKSKPPA). 8 helical membrane-spanning segments follow: residues 28 to 48 (LLYL…WLSP), 66 to 86 (LIKM…IAHI), 101 to 121 (LYFE…GNVV), 167 to 187 (GDIL…MTLG), 205 to 225 (FGVI…AMAF), 241 to 261 (LIAV…GLIA), 326 to 346 (IYMT…LTWT), and 370 to 390 (FITL…GMAI).

The protein belongs to the dicarboxylate/amino acid:cation symporter (DAACS) (TC 2.A.23) family.

Its subcellular location is the cell inner membrane. Its function is as follows. Responsible for the transport of dicarboxylates such as succinate, fumarate, and malate from the periplasm across the membrane. In Rhodopseudomonas palustris (strain BisB18), this protein is C4-dicarboxylate transport protein.